The primary structure comprises 1103 residues: Kinesin-like protein KIF1C (1103 aa).

Residues 5–348 enclose the Kinesin motor domain; it reads SVKVAVRVRP…LRYADRTKQI (344 aa). Residue 97–104 participates in ATP binding; the sequence is GQTGAGKS. At serine 295 the chain carries Phosphoserine. Coiled-coil stretches lie at residues 359-388 and 438-479; these read NARL…SALE and EEAM…LAEM. Residues 400–438 are disordered; the sequence is ALPAVSSPPAPVSPSSPTTHNGELEPSFSPNTESQIGPE. Position 494 is a phosphoserine (serine 494). The FHA domain maps to 523–590; it reads TRVGQVDMDI…LKSGNRIVMG (68 aa). Residues 633 to 674 are a coiled coil; it reads EQQGIDIKLEMEKRLQDLENQYRKEKEEADLLLEQQRLYADS. Phosphoserine is present on residues serine 674 and serine 676. Disordered regions lie at residues 808–828, 874–924, and 950–1103; these read GEEE…ARGA, LAQD…WERV, and QGLQ…GAAV. Residues 813–822 are compositionally biased toward gly residues; the sequence is GGAGSGGGSE. Residues 828–872 are a coiled coil; that stretch reads AEVEDLRAHIDKLTGILQEVKLQNSSKDRELQALRDRMLRMERVI. A compositionally biased stretch (low complexity) spans 893–910; the sequence is PEGSEAAEEAAPSDRMPS. A Phosphoserine modification is found at serine 915. Over residues 953–962 the composition is skewed to gly residues; the sequence is QGSGGRGGGL. Basic residues predominate over residues 1021–1031; that stretch reads PSPRRSHHPRR. Serine 1033 bears the Phosphoserine mark. Position 1041 is an omega-N-methylarginine (arginine 1041). Positions 1062–1083 are enriched in pro residues; it reads PQPPQPYPAQRPPGPRYPPYTT. Threonine 1083 carries the phosphothreonine modification. Serine 1092 carries the post-translational modification Phosphoserine. The span at 1092 to 1103 shows a compositional bias: basic and acidic residues; sequence SAPDLKESGAAV.

The protein belongs to the TRAFAC class myosin-kinesin ATPase superfamily. Kinesin family. Unc-104 subfamily. As to quaternary structure, monomer. Interacts with BICD2. Phosphorylated on tyrosine residues. Expressed in all tissues examined, with most abundant expression in heart and skeletal muscle.

It localises to the cytoplasm. Its subcellular location is the cytoskeleton. Its function is as follows. Motor required for the retrograde transport of Golgi vesicles to the endoplasmic reticulum. Has a microtubule plus end-directed motility. The chain is Kinesin-like protein KIF1C (KIF1C) from Homo sapiens (Human).